The primary structure comprises 188 residues: Murein DD-endopeptidase MepS/Murein LD-carboxypeptidase (188 aa).

The signal sequence occupies residues 1-26; the sequence is MVKSQPILRYILRGIPAIAVAVLLSA. A lipid anchor (N-palmitoyl cysteine) is attached at Cys27. The S-diacylglycerol cysteine moiety is linked to residue Cys27. The region spanning 64–185 is the NlpC/P60 domain; the sequence is VDVKSRIMDQ…KRYNEARRVL (122 aa). Cys94 serves as the catalytic Nucleophile. Catalysis depends on His145, which acts as the Proton acceptor. The active site involves His157.

The protein belongs to the peptidase C40 family. As to quaternary structure, monomer.

It is found in the cell outer membrane. The enzyme catalyses N-acetyl-D-glucosaminyl-N-acetylmuramoyl-L-alanyl-meso-2,6-diaminoheptanedioyl-D-alanine + H2O = N-acetyl-D-glucosaminyl-N-acetylmuramoyl-L-alanyl-meso-2,6-diaminoheptanedioate + D-alanine. It participates in cell wall biogenesis; cell wall polysaccharide biosynthesis. A murein DD-endopeptidase with specificity for D-Ala-meso-diaminopimelic acid (mDAP) cross-links. Its role is probably to cleave D-Ala-mDAP cross-links to allow insertion of new glycans and thus cell wall expansion. Functionally redundant with MepM and MepH. Also has weak LD-carboxypeptidase activity on L-mDAP-D-Ala peptide bonds. The polypeptide is Murein DD-endopeptidase MepS/Murein LD-carboxypeptidase (mepS) (Escherichia coli O157:H7).